Here is a 313-residue protein sequence, read N- to C-terminus: Small ribosomal subunit protein uS2 (313 aa).

Basic and acidic residues predominate over residues 234 to 243; it reads DEEAKEEKTK. A disordered region spans residues 234-313; it reads DEEAKEEKTK…ASKAEAEEGK (80 aa). Basic residues predominate over residues 244–256; the sequence is AKTTAKKVVTKKA. Basic and acidic residues predominate over residues 266–297; that stretch reads AEKKSEKPTTEKRPTKEAAETKETSEEPKTKE.

The protein belongs to the universal ribosomal protein uS2 family.

The protein is Small ribosomal subunit protein uS2 of Coxiella burnetii (strain Dugway 5J108-111).